The chain runs to 82 residues: Small ribosomal subunit protein bS16 (82 aa).

It belongs to the bacterial ribosomal protein bS16 family.

The chain is Small ribosomal subunit protein bS16 from Bdellovibrio bacteriovorus (strain ATCC 15356 / DSM 50701 / NCIMB 9529 / HD100).